The sequence spans 219 residues: Elongation factor Ts (219 aa).

The involved in Mg(2+) ion dislocation from EF-Tu stretch occupies residues 82 to 85 (TDFV).

Belongs to the EF-Ts family.

Its subcellular location is the cytoplasm. Associates with the EF-Tu.GDP complex and induces the exchange of GDP to GTP. It remains bound to the aminoacyl-tRNA.EF-Tu.GTP complex up to the GTP hydrolysis stage on the ribosome. This is Elongation factor Ts from Trichodesmium erythraeum (strain IMS101).